A 204-amino-acid polypeptide reads, in one-letter code: Cytochrome b6 (204 aa).

The chain crosses the membrane as a helical span at residues 23-43 (YCLGGITLTSFLVQVATGSAM). Heme c is bound at residue C24. Residues H75 and H89 each contribute to the heme b site. 3 helical membrane-spanning segments follow: residues 81 to 101 (MMVL…GFKK), 107 to 127 (WVTG…GYSL), and 136 to 157 (AVKI…LVEL). Heme b contacts are provided by H176 and H191. The helical transmembrane segment at 177–197 (TFILPLLTAVFMPMHFLMIRK) threads the bilayer.

Belongs to the cytochrome b family. PetB subfamily. In terms of assembly, the 4 large subunits of the cytochrome b6-f complex are cytochrome b6, subunit IV (17 kDa polypeptide, PetD), cytochrome f and the Rieske protein, while the 4 small subunits are PetG, PetL, PetM and PetN. The complex functions as a dimer. Heme b serves as cofactor. It depends on heme c as a cofactor.

The protein resides in the plastid. It is found in the chloroplast thylakoid membrane. Functionally, component of the cytochrome b6-f complex, which mediates electron transfer between photosystem II (PSII) and photosystem I (PSI), cyclic electron flow around PSI, and state transitions. In Picea abies (Norway spruce), this protein is Cytochrome b6.